The chain runs to 362 residues: Microfibril-associated glycoprotein 3 (362 aa).

An N-terminal signal peptide occupies residues 1 to 18; the sequence is MKLHCCLFTLVASIIVPA. Residues 19-147 are Extracellular-facing; the sequence is AFVLEDVDFD…LRVIFTSGDM (129 aa). N-linked (GlcNAc...) asparagine glycans are attached at residues N36, N41, and N110. In terms of domain architecture, Ig-like C2-type spans 45 to 137; sequence PSSFELSASS…SPIRASYSVT (93 aa). C73 and C124 are joined by a disulfide. The chain crosses the membrane as a helical span at residues 148–170; that stretch reads SVYYMIVCLIAFTITLILNVTRL. Topologically, residues 171–362 are cytoplasmic; sequence CMMSSHLRKT…KDGAYENCQL (192 aa). Disordered regions lie at residues 285 to 306 and 323 to 350; these read VINPEMGRSNSPGGDSDDGSLN and ETKSIDTESQGSSHFSPPDDIGSAESNC. A compositionally biased stretch (polar residues) spans 323-337; it reads ETKSIDTESQGSSHF.

In terms of processing, glycosylated.

The protein resides in the cell membrane. Its function is as follows. Component of the elastin-associated microfibrils. In Homo sapiens (Human), this protein is Microfibril-associated glycoprotein 3 (MFAP3).